The chain runs to 515 residues: mRNA export factor ICP27 homolog (515 aa).

4 residues coordinate Zn(2+): C230, H335, C337, and C342. The CHC2-type zinc finger occupies C230 to C342. Residues Y398–S408 show a composition bias toward polar residues. The segment at Y398–S422 is disordered. The segment covering H409–S422 has biased composition (basic residues).

The protein belongs to the HHV-1 ICP27 protein family.

It is found in the virion tegument. It localises to the virion. The protein resides in the host nucleus. Its subcellular location is the host cytoplasm. Its function is as follows. Immediate early (EI) protein that plays many roles during productive infection including regulation of viral gene expression and nuclear export of intronless viral RNAs. This is mRNA export factor ICP27 homolog from Human herpesvirus 6A (strain Uganda-1102) (HHV-6 variant A).